The following is a 244-amino-acid chain: Multiple organellar RNA editing factor 3, mitochondrial (244 aa).

Residues 1–62 (MALISTRRTL…GPCYISTRPK (62 aa)) constitute a mitochondrion transit peptide. 2 disordered regions span residues 59 to 82 (TRPK…SNRP) and 196 to 244 (YRFT…KPSA). A compositionally biased stretch (polar residues) spans 60–80 (RPKTSGSGYSPLNDPSPNWSN). Over residues 210–226 (PRYDRRRETMQVERREP) the composition is skewed to basic and acidic residues.

It belongs to the MORF family. Heterodimer with MORF1. Homodimer and heterodimers with MORF8/RIP1, MORF4/RIP4 and MORF5/RIP5.

It is found in the mitochondrion. Its function is as follows. Involved in organellar RNA editing. Required for the processing of RNA editing sites in mitochondria. The chain is Multiple organellar RNA editing factor 3, mitochondrial from Arabidopsis thaliana (Mouse-ear cress).